The chain runs to 364 residues: Fructose-bisphosphate aldolase B (364 aa).

A2 is subject to N-acetylalanine. At K13 the chain carries N6-succinyllysine. At S36 the chain carries Phosphoserine. T39 is modified (phosphothreonine). R43 provides a ligand contact to beta-D-fructose 1,6-bisphosphate. Residue S89 is modified to Phosphoserine. Phosphothreonine is present on T119. N6-succinyllysine is present on K121. Phosphoserine is present on S132. E188 serves as the catalytic Proton acceptor. The active-site Schiff-base intermediate with dihydroxyacetone-P is K230. Residues S272, S276, S299, and S301 each carry the phosphoserine modification. A beta-D-fructose 1,6-bisphosphate-binding site is contributed by 272–274; sequence SGG. Position 304 (R304) interacts with beta-D-fructose 1,6-bisphosphate. S309 carries the post-translational modification Phosphoserine. K317 is subject to N6-succinyllysine.

The protein belongs to the class I fructose-bisphosphate aldolase family. As to quaternary structure, homotetramer. Interacts with BBS1, BBS2, BBS4 and BBS7. Forms a ternary complex with G6PD and TP53; this interaction is direct.

The protein localises to the cytoplasm. It localises to the cytosol. The protein resides in the cytoskeleton. Its subcellular location is the microtubule organizing center. It is found in the centrosome. The protein localises to the centriolar satellite. It catalyses the reaction beta-D-fructose 1,6-bisphosphate = D-glyceraldehyde 3-phosphate + dihydroxyacetone phosphate. The catalysed reaction is beta-D-fructose 1-phosphate = D-glyceraldehyde + dihydroxyacetone phosphate. Its pathway is carbohydrate degradation; glycolysis; D-glyceraldehyde 3-phosphate and glycerone phosphate from D-glucose: step 4/4. It functions in the pathway carbohydrate biosynthesis; gluconeogenesis. The protein operates within carbohydrate metabolism; fructose metabolism. Its function is as follows. Catalyzes the aldol cleavage of fructose 1,6-biphosphate to form two triosephosphates dihydroxyacetone phosphate and D-glyceraldehyde 3-phosphate in glycolysis as well as the reverse stereospecific aldol addition reaction in gluconeogenesis. In fructolysis, metabolizes fructose 1-phosphate derived from the phosphorylation of dietary fructose by fructokinase into dihydroxyacetone phosphate and D-glyceraldehyde. Acts as an adapter independently of its enzymatic activity, exerts a tumor suppressor role by stabilizing the ternary complex with G6PD and TP53 to inhibit G6PD activity and keep oxidative pentose phosphate metabolism in check. The protein is Fructose-bisphosphate aldolase B (Aldob) of Rattus norvegicus (Rat).